A 340-amino-acid chain; its full sequence is Probable cyclic nucleotide phosphodiesterase PsycPRwf_0181 (340 aa).

The disordered stretch occupies residues 1-36 (MAPLPHSVSPRHTQVADNGRLSEPTDYHPPTEISTD). Residues Asp47, His49, Asp128, Asn158, His237, His276, and His278 each coordinate Fe cation. AMP contacts are provided by residues His49, Asp128, and 158–159 (NH). His278 is a binding site for AMP.

Belongs to the cyclic nucleotide phosphodiesterase class-III family. Fe(2+) is required as a cofactor.

This is Probable cyclic nucleotide phosphodiesterase PsycPRwf_0181 from Psychrobacter sp. (strain PRwf-1).